We begin with the raw amino-acid sequence, 705 residues long: 1,4-alpha-glucan branching enzyme GlgB (705 aa).

Aspartate 309 (nucleophile) is an active-site residue. The active-site Proton donor is the glutamate 360. A disordered region spans residues 654 to 705; the sequence is VQVERAADPRPNEQQRLVAETPAHEGGRSAPADAAESAEQKPDDEQKGGKKA. The segment covering 691 to 705 has biased composition (basic and acidic residues); that stretch reads AEQKPDDEQKGGKKA.

The protein belongs to the glycosyl hydrolase 13 family. GlgB subfamily. As to quaternary structure, monomer.

The enzyme catalyses Transfers a segment of a (1-&gt;4)-alpha-D-glucan chain to a primary hydroxy group in a similar glucan chain.. The protein operates within glycan biosynthesis; glycogen biosynthesis. In terms of biological role, catalyzes the formation of the alpha-1,6-glucosidic linkages in glycogen by scission of a 1,4-alpha-linked oligosaccharide from growing alpha-1,4-glucan chains and the subsequent attachment of the oligosaccharide to the alpha-1,6 position. This is 1,4-alpha-glucan branching enzyme GlgB from Deinococcus radiodurans (strain ATCC 13939 / DSM 20539 / JCM 16871 / CCUG 27074 / LMG 4051 / NBRC 15346 / NCIMB 9279 / VKM B-1422 / R1).